Reading from the N-terminus, the 172-residue chain is Adenine phosphoribosyltransferase (172 aa).

Belongs to the purine/pyrimidine phosphoribosyltransferase family. As to quaternary structure, homodimer.

The protein localises to the cytoplasm. The enzyme catalyses AMP + diphosphate = 5-phospho-alpha-D-ribose 1-diphosphate + adenine. It participates in purine metabolism; AMP biosynthesis via salvage pathway; AMP from adenine: step 1/1. Catalyzes a salvage reaction resulting in the formation of AMP, that is energically less costly than de novo synthesis. The protein is Adenine phosphoribosyltransferase of Streptococcus agalactiae serotype III (strain NEM316).